An 895-amino-acid chain; its full sequence is Probable LRR receptor-like serine/threonine-protein kinase At5g48740 (895 aa).

The first 16 residues, 1-16, serve as a signal peptide directing secretion; sequence MLFWVLLSSFCVFCFS. Topologically, residues 17–544 are extracellular; the sequence is SPDGFLSLSC…INKKQRKQNR (528 aa). Asn-36, Asn-50, Asn-60, Asn-140, Asn-195, Asn-234, and Asn-318 each carry an N-linked (GlcNAc...) asparagine glycan. LRR repeat units follow at residues 385–407, 408–430, 431–453, 454–477, 478–500, and 511–532; these read RVTS…GDLL, DLKT…GSLK, DLQK…EDLV, NLEV…GKLK, KLRL…LNIT, and CLSF…PQVT. Asn-416, Asn-436, Asn-462, Asn-498, and Asn-521 each carry an N-linked (GlcNAc...) asparagine glycan. A helical membrane pass occupies residues 545–565; sequence IAILLGVSGGALFATFLVFVF. Over 566 to 895 the chain is Cytoplasmic; the sequence is MSIFTRRQRN…SYLAASAHTD (330 aa). Residues 606–888 enclose the Protein kinase domain; that stretch reads RNFKEVIGRG…EAYSLQLSYL (283 aa). ATP contacts are provided by residues 612–620 and Lys-634; that span reads IGRGSFGAV. Residue Tyr-679 is modified to Phosphotyrosine. Asp-732 serves as the catalytic Proton acceptor. Phosphoserine is present on Ser-736. A phosphothreonine mark is found at Thr-767 and Thr-772. A Phosphotyrosine modification is found at Tyr-780.

Belongs to the protein kinase superfamily. Ser/Thr protein kinase family.

The protein resides in the membrane. It carries out the reaction L-seryl-[protein] + ATP = O-phospho-L-seryl-[protein] + ADP + H(+). The catalysed reaction is L-threonyl-[protein] + ATP = O-phospho-L-threonyl-[protein] + ADP + H(+). This chain is Probable LRR receptor-like serine/threonine-protein kinase At5g48740, found in Arabidopsis thaliana (Mouse-ear cress).